A 141-amino-acid chain; its full sequence is MSFLQPSRQKYRKTQRGTLKGKSFRGNQVAFGEYGIQALESHWITQRQIEASRIALVRSLRKGTKVWIRIFPDKPYTKKPAEVRGGGGKGDPEGYVAVVKPGRIMFEFSDVPQDMAEEAFRKVSAKLPIKVRLVKAGGMSI.

It belongs to the universal ribosomal protein uL16 family. Part of the 50S ribosomal subunit.

Functionally, binds 23S rRNA and is also seen to make contacts with the A and possibly P site tRNAs. This is Large ribosomal subunit protein uL16 from Hydrogenobaculum sp. (strain Y04AAS1).